Here is a 75-residue protein sequence, read N- to C-terminus: Small ribosomal subunit protein bS18 (75 aa).

It belongs to the bacterial ribosomal protein bS18 family. In terms of assembly, part of the 30S ribosomal subunit. Forms a tight heterodimer with protein bS6.

Functionally, binds as a heterodimer with protein bS6 to the central domain of the 16S rRNA, where it helps stabilize the platform of the 30S subunit. The polypeptide is Small ribosomal subunit protein bS18 (Cereibacter sphaeroides (strain ATCC 17029 / ATH 2.4.9) (Rhodobacter sphaeroides)).